We begin with the raw amino-acid sequence, 217 residues long: Protein-L-isoaspartate O-methyltransferase (217 aa).

Ser64 is a catalytic residue.

It belongs to the methyltransferase superfamily. L-isoaspartyl/D-aspartyl protein methyltransferase family.

It is found in the cytoplasm. The enzyme catalyses [protein]-L-isoaspartate + S-adenosyl-L-methionine = [protein]-L-isoaspartate alpha-methyl ester + S-adenosyl-L-homocysteine. Its function is as follows. Catalyzes the methyl esterification of L-isoaspartyl residues in peptides and proteins that result from spontaneous decomposition of normal L-aspartyl and L-asparaginyl residues. It plays a role in the repair and/or degradation of damaged proteins. The protein is Protein-L-isoaspartate O-methyltransferase of Nitrobacter winogradskyi (strain ATCC 25391 / DSM 10237 / CIP 104748 / NCIMB 11846 / Nb-255).